The primary structure comprises 275 residues: MSMDGLPPLRDVIERHGLFARKALGQNFLLDLNLTRRIARTAGGLDNATVLEVGPGPGGLTRALLMEGARRVVAIERDERCIAALEEIAAHYPGRLEIVAGDAMKADFAALAGNSGDVKIVANLPYNIGTELLIRWLTPQTWPPFYESMTLMFQREVAERIVAKPGSSHYGRLGVLAGWRTEARIAFDVPPQAFTPPPKVISSVVKIVPRADPLTVEVGRLARTTEAAFGQRRKMLRQSLRSVGGEALLEKAGIDGTRRAETLSVEEFVRLAREI.

Positions 27, 29, 54, 76, 102, and 123 each coordinate S-adenosyl-L-methionine.

The protein belongs to the class I-like SAM-binding methyltransferase superfamily. rRNA adenine N(6)-methyltransferase family. RsmA subfamily.

The protein localises to the cytoplasm. The enzyme catalyses adenosine(1518)/adenosine(1519) in 16S rRNA + 4 S-adenosyl-L-methionine = N(6)-dimethyladenosine(1518)/N(6)-dimethyladenosine(1519) in 16S rRNA + 4 S-adenosyl-L-homocysteine + 4 H(+). Specifically dimethylates two adjacent adenosines (A1518 and A1519) in the loop of a conserved hairpin near the 3'-end of 16S rRNA in the 30S particle. May play a critical role in biogenesis of 30S subunits. In Chelativorans sp. (strain BNC1), this protein is Ribosomal RNA small subunit methyltransferase A.